The chain runs to 123 residues: Small ribosomal subunit protein uS12 (123 aa).

The residue at position 89 (Asp89) is a 3-methylthioaspartic acid.

The protein belongs to the universal ribosomal protein uS12 family. In terms of assembly, part of the 30S ribosomal subunit. Contacts proteins S8 and S17. May interact with IF1 in the 30S initiation complex.

With S4 and S5 plays an important role in translational accuracy. Functionally, interacts with and stabilizes bases of the 16S rRNA that are involved in tRNA selection in the A site and with the mRNA backbone. Located at the interface of the 30S and 50S subunits, it traverses the body of the 30S subunit contacting proteins on the other side and probably holding the rRNA structure together. The combined cluster of proteins S8, S12 and S17 appears to hold together the shoulder and platform of the 30S subunit. This is Small ribosomal subunit protein uS12 from Syntrophus aciditrophicus (strain SB).